Here is a 605-residue protein sequence, read N- to C-terminus: E3 ubiquitin-protein ligase synoviolin A (605 aa).

A helical transmembrane segment spans residues Met-1–Leu-19. The Lumenal portion of the chain corresponds to Lys-20 to Pro-35. The chain crosses the membrane as a helical span at residues Ser-36–Gly-56. Residues Lys-57–Asp-92 lie on the Cytoplasmic side of the membrane. The helical transmembrane segment at Phe-93–Leu-113 threads the bilayer. The Lumenal segment spans residues Ala-114–Trp-129. A helical transmembrane segment spans residues Leu-130–Val-150. Residues Ser-151–Ser-163 lie on the Cytoplasmic side of the membrane. Residues Val-164–Ile-184 form a helical membrane-spanning segment. At Lys-185–Val-218 the chain is on the lumenal side. A helical membrane pass occupies residues Leu-219–Ile-239. An interaction with p53/TP53 region spans residues Lys-230 to Arg-264. Over Arg-240–Gln-605 the chain is Cytoplasmic. The Zn(2+) site is built by Cys-285, Cys-288, Cys-301, His-303, His-306, Cys-309, Cys-320, and Cys-323. The segment at Cys-285–Arg-324 adopts an RING-type; atypical zinc-finger fold. Over residues Thr-334–Thr-355 the composition is skewed to low complexity. The segment at Thr-334–Pro-433 is disordered. Over residues Pro-356–Gly-391 the composition is skewed to pro residues. A compositionally biased stretch (low complexity) spans Pro-403–Gly-414. Polar residues predominate over residues Glu-415–Gln-424. Positions Glu-465–Met-496 form a coiled coil. Positions Gln-513–Gln-605 are disordered. A compositionally biased stretch (low complexity) spans Ile-516–Ser-539. The span at Asp-546–Glu-555 shows a compositional bias: polar residues. Low complexity predominate over residues Ser-556 to Thr-579.

This sequence belongs to the HRD1 family. In terms of assembly, homodimer.

It is found in the endoplasmic reticulum membrane. It carries out the reaction S-ubiquitinyl-[E2 ubiquitin-conjugating enzyme]-L-cysteine + [acceptor protein]-L-lysine = [E2 ubiquitin-conjugating enzyme]-L-cysteine + N(6)-ubiquitinyl-[acceptor protein]-L-lysine.. Its pathway is protein modification; protein ubiquitination. Its function is as follows. E3 ubiquitin-protein ligase which accepts ubiquitin specifically from endoplasmic reticulum-associated UBC7 E2 ligase and transfers it to substrates, promoting their degradation. Component of the endoplasmic reticulum quality control (ERQC) system also called ER-associated degradation (ERAD) involved in ubiquitin-dependent degradation of misfolded endoplasmic reticulum proteins. Also promotes the degradation of normal but naturally short-lived proteins. Protects cells from ER stress-induced apoptosis. Sequesters p53 in the cytoplasm and promotes its degradation, thereby negatively regulating its biological function in transcription, cell cycle regulation and apoptosis. This is E3 ubiquitin-protein ligase synoviolin A (syvn1-a) from Xenopus laevis (African clawed frog).